A 357-amino-acid polypeptide reads, in one-letter code: Alpha-2-macroglobulin receptor-associated protein (357 aa).

A signal peptide spans 1–34 (MAPRRVRSFLRGLPALLLLLLFLGPWPAASHGGK). A disordered region spans residues 32–52 (GGKYSREKNQPKPSPKRESGE). Basic and acidic residues predominate over residues 35 to 52 (YSREKNQPKPSPKRESGE). A phosphoserine mark is found at Ser50 and Ser135. Residues 219 to 310 (SRHTELKEKL…AHEKLRHAES (92 aa)) are a coiled coil. The segment at 237 to 353 (RLRRVSHQGY…DLSGRISRAR (117 aa)) is LDL receptor binding. Position 248 is a phosphothreonine (Thr248). Residue Asn268 is glycosylated (N-linked (GlcNAc...) asparagine). Positions 354 to 357 (HNEL) match the Prevents secretion from ER motif.

This sequence belongs to the alpha-2-MRAP family. In terms of assembly, interacts with the LRP1/alpha-2-macroglobulin receptor heavy and light chains; the interaction is transient and coincides with a reduction of ligand binding by the receptor. Interacts with LRP2/glycoprotein 330. Interacts with LRP1B; binding is followed by internalization and degradation. Interacts with LDLR. Interacts with SORL1. Interacts with LRP1; this interaction is followed by rapid internalization. In terms of processing, N-glycosylated.

It is found in the rough endoplasmic reticulum lumen. The protein resides in the endoplasmic reticulum-Golgi intermediate compartment lumen. It localises to the golgi apparatus. Its subcellular location is the cis-Golgi network. The protein localises to the golgi apparatus lumen. It is found in the endosome lumen. The protein resides in the cell surface. Its function is as follows. Molecular chaperone for LDL receptor-related proteins that may regulate their ligand binding activity along the secretory pathway. This is Alpha-2-macroglobulin receptor-associated protein from Homo sapiens (Human).